We begin with the raw amino-acid sequence, 186 residues long: ATP synthase subunit delta (186 aa).

Belongs to the ATPase delta chain family. As to quaternary structure, F-type ATPases have 2 components, F(1) - the catalytic core - and F(0) - the membrane proton channel. F(1) has five subunits: alpha(3), beta(3), gamma(1), delta(1), epsilon(1). CF(0) has four main subunits: a(1), b(1), b'(1) and c(10-14). The alpha and beta chains form an alternating ring which encloses part of the gamma chain. F(1) is attached to F(0) by a central stalk formed by the gamma and epsilon chains, while a peripheral stalk is formed by the delta, b and b' chains.

It localises to the cell inner membrane. Its function is as follows. F(1)F(0) ATP synthase produces ATP from ADP in the presence of a proton or sodium gradient. F-type ATPases consist of two structural domains, F(1) containing the extramembraneous catalytic core and F(0) containing the membrane proton channel, linked together by a central stalk and a peripheral stalk. During catalysis, ATP synthesis in the catalytic domain of F(1) is coupled via a rotary mechanism of the central stalk subunits to proton translocation. In terms of biological role, this protein is part of the stalk that links CF(0) to CF(1). It either transmits conformational changes from CF(0) to CF(1) or is implicated in proton conduction. The protein is ATP synthase subunit delta of Cereibacter sphaeroides (strain ATCC 17029 / ATH 2.4.9) (Rhodobacter sphaeroides).